A 615-amino-acid polypeptide reads, in one-letter code: Homologous recombination OB-fold protein (615 aa).

Disordered stretches follow at residues 42–75 (LRPVSSRPQETVQTQSSRPVPSYPTSNQSVPRLC), 213–326 (PWPS…PVTQ), and 546–590 (DFLE…FPEE). S47 carries the phosphoserine modification. Polar residues-rich tracts occupy residues 47–71 (SRPQETVQTQSSRPVPSYPTSNQSV), 232–241 (SCVSTSQQRG), and 257–275 (IRSSPQNYGPGQPLQSPRA). Residues 302–317 (SSRAPVSSVESPVSTP) are compositionally biased toward low complexity.

In terms of assembly, interacts with MCM8; this interaction is necessary for MCM8-MCM9 helicase complex recruitment to DNA damage sites. Interacts with RPA1; this interaction associates HROB with the RPA complex.

Its subcellular location is the nucleus. It localises to the chromosome. In terms of biological role, DNA-binding protein involved in homologous recombination that acts by recruiting the MCM8-MCM9 helicase complex to sites of DNA damage to promote DNA repair synthesis. This chain is Homologous recombination OB-fold protein, found in Mus musculus (Mouse).